Consider the following 262-residue polypeptide: MSDILNKIIATKREEVAAARLAKPLAIVEAEAIAQPAPRDFVGAIRNKIANDRPAVIAEIKKASPSKGIIRPDFQPADIARSYEQHGAACLSVLTDRQYFQGCPEYLQSARAACALPVLRKDFMVDAYQVAEARAMGADAILLIAAALTLEEMQALETQASAYGMAVLVEVHNGEELDAALQLKTPLLGINNRNLRTFAVTLETTLGLLSRIPAGRIVVTESGILKPEEVALMRTNKVNAFLVGEAFMRVPEPGAELARLFA.

Belongs to the TrpC family.

It catalyses the reaction 1-(2-carboxyphenylamino)-1-deoxy-D-ribulose 5-phosphate + H(+) = (1S,2R)-1-C-(indol-3-yl)glycerol 3-phosphate + CO2 + H2O. The protein operates within amino-acid biosynthesis; L-tryptophan biosynthesis; L-tryptophan from chorismate: step 4/5. This Dechloromonas aromatica (strain RCB) protein is Indole-3-glycerol phosphate synthase.